A 248-amino-acid chain; its full sequence is Something about silencing protein 5 (248 aa).

A YEATS domain is found at 1–139; sequence MDHSIEVTFR…SELSKYFDLP (139 aa). The residue at position 144 (Ser144) is a Phosphoserine. Positions 223–248 are disordered; the sequence is TKQERTNFGSDAIHKDEPVKAHNKLK.

As to quaternary structure, component of the SAS complex, at least composed of SAS2, SAS4 and SAS5. These three proteins constitute the core of the complex, and are sufficient to acetylate histones.

It is found in the nucleus. Functionally, component of the SAS complex, a multiprotein complex that acetylates 'Lys-16' of histone H4 and 'Lys-14' of histone H3. The SAS complex is however unable to acetylate nucleosomal histones. The complex is involved in transcriptional silencing at telomeres and at HML locus. Also involved in rDNA silencing. In the complex, SAS5 is required for maximal histone acetyltransferase (HAT) activity of the complex, suggesting that it may be required to stabilize the complex or help in substrate recognition. The polypeptide is Something about silencing protein 5 (SAS5) (Saccharomyces cerevisiae (strain ATCC 204508 / S288c) (Baker's yeast)).